Consider the following 615-residue polypeptide: 1-deoxy-D-xylulose-5-phosphate synthase (615 aa).

Thiamine diphosphate is bound by residues histidine 72 and 113–115 (GHA). Residue aspartate 144 coordinates Mg(2+). Residues 145 to 146 (GA), asparagine 173, tyrosine 281, and glutamate 360 each bind thiamine diphosphate. Asparagine 173 serves as a coordination point for Mg(2+).

This sequence belongs to the transketolase family. DXPS subfamily. Homodimer. It depends on Mg(2+) as a cofactor. Thiamine diphosphate is required as a cofactor.

The enzyme catalyses D-glyceraldehyde 3-phosphate + pyruvate + H(+) = 1-deoxy-D-xylulose 5-phosphate + CO2. Its pathway is metabolic intermediate biosynthesis; 1-deoxy-D-xylulose 5-phosphate biosynthesis; 1-deoxy-D-xylulose 5-phosphate from D-glyceraldehyde 3-phosphate and pyruvate: step 1/1. Catalyzes the acyloin condensation reaction between C atoms 2 and 3 of pyruvate and glyceraldehyde 3-phosphate to yield 1-deoxy-D-xylulose-5-phosphate (DXP). The sequence is that of 1-deoxy-D-xylulose-5-phosphate synthase from Thermus thermophilus (strain ATCC BAA-163 / DSM 7039 / HB27).